Here is a 295-residue protein sequence, read N- to C-terminus: Ribosomal protein L11 methyltransferase (295 aa).

Residues T146, G167, D189, and N231 each coordinate S-adenosyl-L-methionine.

It belongs to the methyltransferase superfamily. PrmA family.

It localises to the cytoplasm. It carries out the reaction L-lysyl-[protein] + 3 S-adenosyl-L-methionine = N(6),N(6),N(6)-trimethyl-L-lysyl-[protein] + 3 S-adenosyl-L-homocysteine + 3 H(+). Its function is as follows. Methylates ribosomal protein L11. This is Ribosomal protein L11 methyltransferase from Vibrio cholerae serotype O1 (strain M66-2).